The sequence spans 462 residues: Retinoic acid receptor alpha (462 aa).

The segment at 1 to 87 (MASNSSSCPT…PPPLPRIYKP (87 aa)) is modulating. Residues 52 to 64 (GYSTPSPATIETQ) are compositionally biased toward polar residues. The disordered stretch occupies residues 52-77 (GYSTPSPATIETQSSSSEEIVPSPPS). S77 bears the Phosphoserine; by CDK7 mark. 2 NR C4-type zinc fingers span residues 88 to 108 (CFVC…CEGC) and 124 to 148 (CHRD…LQKC). Positions 88-153 (CFVCQDKSSG…RLQKCFDVGM (66 aa)) form a DNA-binding region, nuclear receptor. Position 96 is a phosphoserine; by PKB/AKT1 (S96). The segment at 154–182 (SKESVRNDRNKKKKEAPKPECSESYTLTP) is hinge. Glycyl lysine isopeptide (Lys-Gly) (interchain with G-Cter in SUMO) cross-links involve residues K166 and K171. Positions 183–417 (EVGELIEKVR…PLIQEMLENS (235 aa)) constitute an NR LBD domain. Position 219 is a phosphoserine; by PKA (S219). C235 lines the all-trans-retinoate pocket. A UBR5-degron motif is present at residues 254-258 (IADQI). All-trans-retinoate is bound at residue S287. At K347 the chain carries N6,N6,N6-trimethyllysine. S369 bears the Phosphoserine; by PKA and RPS6KA5 mark. A Glycyl lysine isopeptide (Lys-Gly) (interchain with G-Cter in SUMO) cross-link involves residue K399. The interval 404-419 (GSMPPLIQEMLENSEG) is required for binding corepressor NCOR1. The 9aaTAD motif lies at 408 to 416 (PLIQEMLEN). The segment at 420–462 (LDTLSGQSGGGTRDGGGLAPPPGSCSPSLSPSSHRSSPATQSP) is disordered. A compositionally biased stretch (gly residues) spans 426–437 (QSGGGTRDGGGL). The span at 444 to 462 (CSPSLSPSSHRSSPATQSP) shows a compositional bias: low complexity.

The protein belongs to the nuclear hormone receptor family. NR1 subfamily. Heterodimer; with RXRA. Binds DNA preferentially as a heterodimer. RXRA serves as enhancer to induce RARA binding to RARE. Interacts with RXRG. Interacts with NCOA3 and NCOA6 coactivators, leading to a strong increase of transcription of target genes. Interacts with NCOA7; the interaction requires ligand-binding. Interacts (via the ligand-binding domain) with PRAME; interaction is direct and ligand (retinoic acid)-dependent. Interacts with PRKAR1A; the interaction negatively regulates RARA transcriptional activity. Interacts with NCOR1; the interaction occurs in the absence of ligand and represses transcriptional activity. Interacts with NCOR2. Interacts with PRMT2. Interacts with LRIF1. Interacts with ASXL1 and NCOA1. Interacts with ACTN4. Interacts with CDK7; the interaction is enhanced by interaction with GTF2H3. Interacts with GTF2H3; the interaction requires prior phosphorylation on Ser-369 which then enhances interaction with CDK7. In a complex with HDAC3, HDAC5 and HDAC7; the HDACs serve as corepressors of RARA, causing its deacetylation and inhibition of RARE DNA element binding; association with HDAC3, HDAC5 and HDAC7 is increased upon oscillatory shear stress. In the absence of hormonal ligand, interacts with TACC1. Phosphorylated on serine and threonine residues. Phosphorylation does not change during cell cycle. Phosphorylation on Ser-77 is crucial for the N-terminal AF1 transcriptional activity. Under stress conditions, MAPK8 enhances phosphorylation on Thr-181, Ser-445 and Ser-461 leading to RARA ubiquitination and degradation. Phosphorylation by AKT1 inhibits the transactivation activity. On retinoic acid stimulation, phosphorylation on Ser-369 by RPS6KA5 promotes interaction with GTF2H3 and the CDK7-mediated phosphorylation of Ser-77. In terms of processing, ubiquitinated by UBR5, leading to its degradation: UBR5 specifically recognizes and binds ligand-bound RARA when it is not associated with coactivators (NCOAs). In presence of NCOAs, the UBR5-degron is not accessible, preventing its ubiquitination and degradation. Post-translationally, sumoylated with SUMO2, mainly on Lys-399 which is also required for SENP6 binding. On all-trans retinoic acid (ATRA) binding, a conformational change may occur that allows sumoylation on two additional site, Lys-166 and Lys-171. Probably desumoylated by SENP6. Sumoylation levels determine nuclear localization and regulate ATRA-mediated transcriptional activity. Acetylated; acetylation is increased upon pulsatile shear stress and decreased upon oscillatory shear stress. In terms of tissue distribution, expressed in Sertoli cells and germ cells.

The protein resides in the nucleus. It is found in the cytoplasm. Functionally, receptor for retinoic acid. Retinoic acid receptors bind as heterodimers to their target response elements in response to their ligands, all-trans or 9-cis retinoic acid, and regulate gene expression in various biological processes. The RXR/RAR heterodimers bind to the retinoic acid response elements (RARE) composed of tandem 5'-AGGTCA-3' sites known as DR1-DR5. In the absence of ligand, the RXR-RAR heterodimers associate with a multiprotein complex containing transcription corepressors that induce histone deacetylation, chromatin condensation and transcriptional suppression. On ligand binding, the corepressors dissociate from the receptors and associate with the coactivators leading to transcriptional activation. Formation of heterocomplex with histone deacetylases might lead to inhibition of RARE DNA element binding and to transcriptional repression. Transcriptional activation and RARE DNA element binding might be supported by the transcription factor KLF2. RARA plays an essential role in the regulation of retinoic acid-induced germ cell development during spermatogenesis. Has a role in the survival of early spermatocytes at the beginning prophase of meiosis. In Sertoli cells, may promote the survival and development of early meiotic prophase spermatocytes. In concert with RARG, required for skeletal growth, matrix homeostasis and growth plate function. Together with RXRA, positively regulates microRNA-10a expression, thereby inhibiting the GATA6/VCAM1 signaling response to pulsatile shear stress in vascular endothelial cells. In association with HDAC3, HDAC5 and HDAC7 corepressors, plays a role in the repression of microRNA-10a and thereby promotes the inflammatory response. This chain is Retinoic acid receptor alpha (Rara), found in Mus musculus (Mouse).